The primary structure comprises 874 residues: MKSSEIRQKFLQFFQSKGHTIVPSSSLVPANDPTLLFTNSGMVQFKDVFTGKEARAYKRATSSQRSVRAGGKHNDLENVGYTARHHTFFEMLGNFSFGDYFKREAIQYAWELLTQVYRLPAEKLWVTVYQEDDEAYDIWAKEVGVPAERIIRIGDNKGARYASDNFWQMADTGPCGPCSEIFYDHGPEIWGGPPGSLEEDGDRYIEIWNLVFMQFERDAAGNMERLPKPCVDTGMGLERIAAVLQHVHSNYEIDLFQKLIAAAARETGVKDLADNSLKVIADHIRACAFLIVDGIIPSNEGRGYVLRRIVRRALRHGYKLGQTKPFFHRLVPDLVAEMGEAYPELAQVAERVAQVLRQEEKRFGETLEHGMKILDGALAKVAKGDPLDGTTLFTLYDTYGFPVDLTADICRERGVEVDMAGFEAAMQRQREQARAAGKFKMAEGLSYEGAETRFEGYESLELSGVKVTALYVEGTQVEQVSAGQDAVVVLDATPFYAESGGQVGDTGLLEAGGVRFAVADTLKIQPGVFGHHGTLEAGALKVGDTLLARVDAVRRARTVRNHSATHLMHKALREVLGAHVQQRGSLVDPDKTRFDFAHDAPMTAEQIARVEAIVNAEVLANQATEAKVMAYDDAVKGGAMALFGEKYGDTVRVLDIGFSRELCGGTHVRRTGDIGLFKVVSEGGVAAGVRRIEAITGDNALAWVQDQNVLLQRAAGVLRAPAHELPERIAQVQEQLKALEKELEQARTKLAASAGNDLAATATVEVKGIKVLAASIGDVDPKALRGMVDNLKDRLKPAVVLLAAGSADGKISLVGGVTADLTGRIKAGDLVGFVAGQVGGKGGGRPDMAMGGGTDLAALPAAVASVQKWVDERL.

Residues His562, His566, Cys663, and His667 each coordinate Zn(2+).

It belongs to the class-II aminoacyl-tRNA synthetase family. Zn(2+) is required as a cofactor.

It is found in the cytoplasm. The catalysed reaction is tRNA(Ala) + L-alanine + ATP = L-alanyl-tRNA(Ala) + AMP + diphosphate. Catalyzes the attachment of alanine to tRNA(Ala) in a two-step reaction: alanine is first activated by ATP to form Ala-AMP and then transferred to the acceptor end of tRNA(Ala). Also edits incorrectly charged Ser-tRNA(Ala) and Gly-tRNA(Ala) via its editing domain. The sequence is that of Alanine--tRNA ligase from Bordetella parapertussis (strain 12822 / ATCC BAA-587 / NCTC 13253).